Here is a 355-residue protein sequence, read N- to C-terminus: Histidinol-phosphate aminotransferase (355 aa).

N6-(pyridoxal phosphate)lysine is present on K211.

This sequence belongs to the class-II pyridoxal-phosphate-dependent aminotransferase family. Histidinol-phosphate aminotransferase subfamily. As to quaternary structure, homodimer. Requires pyridoxal 5'-phosphate as cofactor.

The enzyme catalyses L-histidinol phosphate + 2-oxoglutarate = 3-(imidazol-4-yl)-2-oxopropyl phosphate + L-glutamate. The protein operates within amino-acid biosynthesis; L-histidine biosynthesis; L-histidine from 5-phospho-alpha-D-ribose 1-diphosphate: step 7/9. In Aeromonas salmonicida (strain A449), this protein is Histidinol-phosphate aminotransferase.